Consider the following 217-residue polypeptide: uncharacterized protein (217 aa).

This is an uncharacterized protein from Homo sapiens (Human).